The primary structure comprises 157 residues: Phosphopantetheine adenylyltransferase (157 aa).

Position 8 (threonine 8) interacts with substrate. ATP is bound by residues 8–9 (TF) and histidine 16. Residues lysine 40, threonine 72, and arginine 86 each coordinate substrate. ATP contacts are provided by residues 87–89 (GLR), glutamate 97, and 122–128 (YSFLSSS).

Belongs to the bacterial CoaD family. In terms of assembly, homohexamer. Mg(2+) serves as cofactor.

It localises to the cytoplasm. It catalyses the reaction (R)-4'-phosphopantetheine + ATP + H(+) = 3'-dephospho-CoA + diphosphate. It functions in the pathway cofactor biosynthesis; coenzyme A biosynthesis; CoA from (R)-pantothenate: step 4/5. Functionally, reversibly transfers an adenylyl group from ATP to 4'-phosphopantetheine, yielding dephospho-CoA (dPCoA) and pyrophosphate. The polypeptide is Phosphopantetheine adenylyltransferase (Prochlorococcus marinus (strain MIT 9301)).